The chain runs to 120 residues: NAD(P)H-quinone oxidoreductase subunit 3, chloroplastic (120 aa).

A run of 3 helical transmembrane segments spans residues 9 to 29, 64 to 84, and 88 to 108; these read IFWAFLIISSAIPVLAFFISG, MFALVFVVFDVETVFLYPWAM, and VLGVSAFIEAFIFVLILILGL.

It belongs to the complex I subunit 3 family. In terms of assembly, NDH is composed of at least 16 different subunits, 5 of which are encoded in the nucleus.

Its subcellular location is the plastid. It localises to the chloroplast thylakoid membrane. It carries out the reaction a plastoquinone + NADH + (n+1) H(+)(in) = a plastoquinol + NAD(+) + n H(+)(out). The enzyme catalyses a plastoquinone + NADPH + (n+1) H(+)(in) = a plastoquinol + NADP(+) + n H(+)(out). In terms of biological role, NDH shuttles electrons from NAD(P)H:plastoquinone, via FMN and iron-sulfur (Fe-S) centers, to quinones in the photosynthetic chain and possibly in a chloroplast respiratory chain. The immediate electron acceptor for the enzyme in this species is believed to be plastoquinone. Couples the redox reaction to proton translocation, and thus conserves the redox energy in a proton gradient. The chain is NAD(P)H-quinone oxidoreductase subunit 3, chloroplastic from Barbarea verna (Land cress).